The following is a 103-amino-acid chain: Protein FMC1 homolog (103 aa).

This sequence belongs to the FMC1 family.

This is Protein FMC1 homolog from Nematostella vectensis (Starlet sea anemone).